A 1039-amino-acid chain; its full sequence is MDKRFKWPPKKRANYLESPYPHIPSRGRQRNLHGHPNQTQHLHQHPGKIYERQQYGNGRGGHGGGNNNYRKLLHSLPAEHGGGAMAPPSSGGTVCAGADMVKLISENNNLRRMVMLNLNLMQEQTDSIAAKDKELDDQSAKMSVVKAQNEELKQAVAQLEAANQELCKQLRRKNQRRNDNDDDDDDPPLPPAAPQQKLIRCHAETQTVFREREQGTQTIDAQPQFANALPRGINMKESPALDHHAGAVTNQPASKRSESKGRGEFNGKKVSTFILQRMNQDFEHHIHEQTEVAEEHEMEAHKEQISQEEDQLVAEEDHLHMQEVHTEEVVGGDIFHDALESIEMEVVTEELVDMEEHGQSVDANGHIEEDDDEDDEDDENSDKDDDSEEDDYPWMHSDADVNARTEEELWQNQNYLLELDPTEEKTCAPSAHSTPNHQQKSSTQAEIRKEGNQNRITEKLLQLKPEPMVDALEAPILPKWVAFKKKDKEHESVPESPEVPKQQPHQEDAIVDHNAIKNQLEVPKPDLKPKDQPKDEQRQDGQLDVRVEPQEDVRKVQKETLKRQPEDAPKHLPKAVAPKVTKTSSRESTLPKANTADIKDAPAQKVIANHQSTKTQTDPVKTQRLQVKIRQYEMHPDMRTGSSAPSDIRKQKNVDPVSTPETKTIKSKSMLVNDKKTTSETSQSPDQEIDVETVRRKLAEHLKKELLSQSHSSQVTLKKIRERVATNLIYPPPSAPVSSTTITPAPTPSTTPTPGSTPQHAVTSSMDQEISAAKSKSKAAEQIATPLTPQSNSSVSSTTSTIRKTLNNCSPHTYSKATARSGKLQSRFRTATFPYSTRTWEDQEFHCDNEFFLEEADELLADNPSLEIPKWRDVPVPPSSDKIDTELLSDATFERRHQKYVKDEVDRKCRDARYMKEQIRLEQLRMRRNQDEVLVALDPLRASTFYPLPEDIEAIQFVNEVTVQAFGENVVNMEARDDFGVPWVDAIEAPTSIARSKALAEPVATLASKKIPTTAAEARHQENHSSYVFPKRRKRQKNR.

Over residues 1–13 (MDKRFKWPPKKRA) the composition is skewed to basic residues. Disordered regions lie at residues 1-44 (MDKR…HLHQ) and 171-199 (RRKN…QKLI). S18 carries the phosphoserine modification. A Phosphoserine modification is found at S238. Disordered regions lie at residues 244-266 (HAGA…GEFN), 358-454 (GQSV…GNQN), 485-691 (KKDK…EIDV), and 729-799 (IYPP…SSTT). The span at 255 to 266 (KRSESKGRGEFN) shows a compositional bias: basic and acidic residues. The span at 368–392 (EEDDDEDDEDDENSDKDDDSEEDDY) shows a compositional bias: acidic residues. The segment covering 397–407 (SDADVNARTEE) has biased composition (basic and acidic residues). The span at 431–445 (AHSTPNHQQKSSTQA) shows a compositional bias: polar residues. Position 433 is a phosphoserine (S433). At T434 the chain carries Phosphothreonine. S492 and S496 each carry phosphoserine. Composition is skewed to basic and acidic residues over residues 504 to 515 (PHQEDAIVDHNA) and 523 to 570 (PKPD…DAPK). 2 stretches are compositionally biased toward polar residues: residues 581–592 (TKTSSRESTLPK) and 609–625 (NHQS…TQRL). S585 carries the post-translational modification Phosphoserine. A Phosphothreonine modification is found at T659. 2 positions are modified to phosphoserine: S682 and S684. T747 is subject to Phosphothreonine. Residue S749 is modified to Phosphoserine. Phosphothreonine is present on residues T750, T751, and T753. Residues 759–768 (QHAVTSSMDQ) are compositionally biased toward polar residues. A phosphoserine mark is found at S764 and S765. Residue T788 is modified to Phosphothreonine. The residue at position 810 (S810) is a Phosphoserine. Phosphothreonine occurs at positions 813 and 832. The 119-residue stretch at 865-983 (SLEIPKWRDV…EARDDFGVPW (119 aa)) folds into the PEHE domain. Residues S879 and S889 each carry the phosphoserine modification. The tract at residues 886 to 904 (ELLSDATFERRHQKYVKDE) is interaction with mof HAT domain. The segment at 1011 to 1039 (IPTTAAEARHQENHSSYVFPKRRKRQKNR) is disordered. Residue T1014 is modified to Phosphothreonine. S1025 is subject to Phosphoserine. Over residues 1030 to 1039 (PKRRKRQKNR) the composition is skewed to basic residues. Positions 1032 to 1037 (RRKRQK) match the Nuclear localization signal motif.

Belongs to the msl-1 family. In terms of assembly, component of the male-specific lethal (MSL) histone acetyltransferase complex, composed of mof, mle, msl-1, msl-2 and msl-3 proteins, as well as roX1 and roX2 non-coding RNAs. Interacts (via PEHE domain) with mof (via HAT domain) and msl-3 (via MRG domain); both interactions are direct. Interacts with tamo via the nuclear localization signal. Component of a maternal MSL subcomplex composed of mof, msl-1 and msl-3. Phosphorylation at Ser-18, Thr743, Thr-747 and Thr-751 is required to promote phosphorylation of 'Ser-5' of the C-terminal heptapeptide repeat domain (CTD) of the largest RNA polymerase II subunit Polr2A. Phosphorylated by Cdk7 in vitro. In contrast, phosphorylation at Ser-18, Thr743, Thr-747 and Thr-751 does not affect its role in dosage compensation in males. In terms of processing, ubiquitinated by msl-2.

Its subcellular location is the nucleus. It is found in the chromosome. In terms of biological role, component of the male-specific lethal (MSL) histone acetyltransferase complex, a multiprotein complex essential for elevating transcription of the single X chromosome in the male (X chromosome dosage compensation). The MSL complex specifically associates with the single X chromosome in males and mediates formation of H4K16ac, promoting a two-fold activation of X chromosome. In complex with msl-2, promotes ubiquitination of histone H2B. In addition to its role in dosage compensation in males, regulates the activity of gene promoters: acts together with Cdk7 to promote phosphorylation of 'Ser-5' of the C-terminal heptapeptide repeat domain (CTD) of the largest RNA polymerase II subunit Polr2A. The polypeptide is Protein male-specific lethal-1 (Drosophila melanogaster (Fruit fly)).